Here is a 210-residue protein sequence, read N- to C-terminus: Imidazoleglycerol-phosphate dehydratase (210 aa).

The protein belongs to the imidazoleglycerol-phosphate dehydratase family.

Its subcellular location is the cytoplasm. It catalyses the reaction D-erythro-1-(imidazol-4-yl)glycerol 3-phosphate = 3-(imidazol-4-yl)-2-oxopropyl phosphate + H2O. It participates in amino-acid biosynthesis; L-histidine biosynthesis; L-histidine from 5-phospho-alpha-D-ribose 1-diphosphate: step 6/9. This chain is Imidazoleglycerol-phosphate dehydratase, found in Acidovorax ebreus (strain TPSY) (Diaphorobacter sp. (strain TPSY)).